A 363-amino-acid polypeptide reads, in one-letter code: GDSL esterase/lipase At3g14220 (363 aa).

Residues 1–28 form the signal peptide; sequence MAKNRNLVFFLGVLASFTLSSFPVTVSG. The Nucleophile role is filled by Ser39. Active-site residues include Asp318 and His321.

Belongs to the 'GDSL' lipolytic enzyme family.

The protein localises to the secreted. This is GDSL esterase/lipase At3g14220 from Arabidopsis thaliana (Mouse-ear cress).